We begin with the raw amino-acid sequence, 120 residues long: Transmembrane protein 010R (120 aa).

2 helical membrane passes run 40–60 (FCGA…ATAT) and 72–92 (SIFF…VWFL).

Belongs to the IIV-6 010R family.

The protein localises to the membrane. This chain is Transmembrane protein 010R, found in Invertebrate iridescent virus 6 (IIV-6).